The following is a 221-amino-acid chain: Deoxyribose-phosphate aldolase (221 aa).

Asp-89 (proton donor/acceptor) is an active-site residue. The Schiff-base intermediate with acetaldehyde role is filled by Lys-151. Lys-180 serves as the catalytic Proton donor/acceptor.

The protein belongs to the DeoC/FbaB aldolase family. DeoC type 1 subfamily.

The protein resides in the cytoplasm. The enzyme catalyses 2-deoxy-D-ribose 5-phosphate = D-glyceraldehyde 3-phosphate + acetaldehyde. It functions in the pathway carbohydrate degradation; 2-deoxy-D-ribose 1-phosphate degradation; D-glyceraldehyde 3-phosphate and acetaldehyde from 2-deoxy-alpha-D-ribose 1-phosphate: step 2/2. Catalyzes a reversible aldol reaction between acetaldehyde and D-glyceraldehyde 3-phosphate to generate 2-deoxy-D-ribose 5-phosphate. The polypeptide is Deoxyribose-phosphate aldolase (Mesomycoplasma hyopneumoniae (strain J / ATCC 25934 / NCTC 10110) (Mycoplasma hyopneumoniae)).